Consider the following 191-residue polypeptide: Fe/S biogenesis protein NfuA (191 aa).

Positions 149 and 152 each coordinate [4Fe-4S] cluster.

Belongs to the NfuA family. Homodimer. It depends on [4Fe-4S] cluster as a cofactor.

In terms of biological role, involved in iron-sulfur cluster biogenesis. Binds a 4Fe-4S cluster, can transfer this cluster to apoproteins, and thereby intervenes in the maturation of Fe/S proteins. Could also act as a scaffold/chaperone for damaged Fe/S proteins. This chain is Fe/S biogenesis protein NfuA, found in Buchnera aphidicola subsp. Baizongia pistaciae (strain Bp).